The primary structure comprises 374 residues: Glutamate 5-kinase (374 aa).

Lys-9 is an ATP binding site. 3 residues coordinate substrate: Ser-49, Asp-136, and Asn-148. Residues 168–169 (TD) and 210–216 (TGGMRSK) contribute to the ATP site. The 79-residue stretch at 276-354 (SGTITVDSGA…EEARQYSYLH (79 aa)) folds into the PUA domain.

This sequence belongs to the glutamate 5-kinase family.

It localises to the cytoplasm. It carries out the reaction L-glutamate + ATP = L-glutamyl 5-phosphate + ADP. The protein operates within amino-acid biosynthesis; L-proline biosynthesis; L-glutamate 5-semialdehyde from L-glutamate: step 1/2. Its function is as follows. Catalyzes the transfer of a phosphate group to glutamate to form L-glutamate 5-phosphate. The polypeptide is Glutamate 5-kinase (Geobacillus thermodenitrificans (strain NG80-2)).